A 439-amino-acid chain; its full sequence is Glutamate--tRNA ligase 2 (439 aa).

A 'HIGH' region motif is present at residues 6–16 (PSPTGDMHIGN). The 'KMSKS' region signature appears at 232 to 236 (KMSKR). K235 serves as a coordination point for ATP.

This sequence belongs to the class-I aminoacyl-tRNA synthetase family. Glutamate--tRNA ligase type 1 subfamily. In terms of assembly, monomer.

It localises to the cytoplasm. The enzyme catalyses tRNA(Glu) + L-glutamate + ATP = L-glutamyl-tRNA(Glu) + AMP + diphosphate. In terms of biological role, catalyzes the attachment of glutamate to tRNA(Glu) in a two-step reaction: glutamate is first activated by ATP to form Glu-AMP and then transferred to the acceptor end of tRNA(Glu). The sequence is that of Glutamate--tRNA ligase 2 from Helicobacter pylori (strain P12).